We begin with the raw amino-acid sequence, 356 residues long: Protein pelota homolog (356 aa).

It belongs to the eukaryotic release factor 1 family. Pelota subfamily. Monomer. It depends on a divalent metal cation as a cofactor.

Its subcellular location is the cytoplasm. Its function is as follows. May function in recognizing stalled ribosomes, interact with stem-loop structures in stalled mRNA molecules, and effect endonucleolytic cleavage of the mRNA. May play a role in the release non-functional ribosomes and degradation of damaged mRNAs. Has endoribonuclease activity. The protein is Protein pelota homolog of Pyrococcus horikoshii (strain ATCC 700860 / DSM 12428 / JCM 9974 / NBRC 100139 / OT-3).